A 128-amino-acid polypeptide reads, in one-letter code: Gastrotropin (128 aa).

Ala-2 bears the N-acetylalanine mark.

Belongs to the calycin superfamily. Fatty-acid binding protein (FABP) family. In terms of tissue distribution, predominantly expressed in ileum; also expressed in ovary.

The protein localises to the cytoplasm. It is found in the membrane. Functionally, binds to bile acids and is involved in enterohepatic bile acid metabolism. Required for efficient apical to basolateral transport of conjugated bile acids in ileal enterocytes. Stimulates gastric acid and pepsinogen secretion. The chain is Gastrotropin (Fabp6) from Rattus norvegicus (Rat).